Reading from the N-terminus, the 322-residue chain is Mitochondrial glutamate carrier 1 (322 aa).

Solcar repeat units follow at residues 6–93 (ISLP…FRYQ), 101–214 (LTLF…LNEL), and 223–312 (SPFY…GIAE). 6 consecutive transmembrane segments (helical) span residues 12 to 32 (LINGGIAGLIGVTCVFPIDLA), 62 to 82 (YFGMYRGAAVNLTLVTPEKAI), 107 to 127 (MLAGCGAGTCQVIVTTPMEML), 189 to 209 (GLGATLLRDVPFSIVYFPLFA), 223 to 243 (SPFYVSFLAGCVAGSAAAVAV), and 292 to 312 (ALVIAPLFGIAQVVYFLGIAE).

Belongs to the mitochondrial carrier (TC 2.A.29) family.

It is found in the mitochondrion inner membrane. The catalysed reaction is L-glutamate(in) + H(+)(in) = L-glutamate(out) + H(+)(out). Its function is as follows. Mitochondrial glutamate/H(+) symporter. Responsible for the transport of glutamate from the cytosol into the mitochondrial matrix with the concomitant import of a proton. Plays a role in the control of glucose-stimulated insulin secretion. This is Mitochondrial glutamate carrier 1 (SLC25A22) from Bos taurus (Bovine).